A 151-amino-acid polypeptide reads, in one-letter code: Large-conductance mechanosensitive channel (151 aa).

The next 2 helical transmembrane spans lie at 12 to 32 and 71 to 91; these read GNIV…ALVT and VLLS…FLVV. Residues 122-151 are disordered; sequence AQTNGDSPGRHGGRGTPSPTDGPLASTESQ.

The protein belongs to the MscL family. In terms of assembly, homopentamer.

The protein localises to the cell membrane. Functionally, channel that opens in response to stretch forces in the membrane lipid bilayer. May participate in the regulation of osmotic pressure changes within the cell. This is Large-conductance mechanosensitive channel from Mycobacterium bovis (strain BCG / Pasteur 1173P2).